The following is a 597-amino-acid chain: Kelch-like protein 21 (597 aa).

The region spanning 35 to 103 (LDVTLEAAGG…SYTGRVAVSG (69 aa)) is the BTB domain. The BACK domain maps to 138-239 (CLDMQDFAEA…RRFYLLAHVE (102 aa)). Kelch repeat units lie at residues 287–335 (ILVL…ALGN), 336–382 (DIYV…VLDG), 384–422 (LYVV…ACRG), 423–470 (RLYA…TLNG), 472–512 (MYFV…VLGG), and 513–560 (KLYV…SIFR). Positions 570–597 (GRGFELDSGSDDMDPGRPRPPRDPDELH) are disordered. Over residues 583 to 597 (DPGRPRPPRDPDELH) the composition is skewed to basic and acidic residues.

In terms of assembly, component of the BCR(KLHL21) E3 ubiquitin ligase complex, at least composed of CUL3, KLHL21 and RBX1.

It is found in the cytoplasm. It localises to the cytoskeleton. Its subcellular location is the spindle. Its pathway is protein modification; protein ubiquitination. Substrate-specific adapter of a BCR (BTB-CUL3-RBX1) E3 ubiquitin-protein ligase complex required for efficient chromosome alignment and cytokinesis. The BCR(KLHL21) E3 ubiquitin ligase complex regulates localization of the chromosomal passenger complex (CPC) from chromosomes to the spindle midzone in anaphase and mediates the ubiquitination of AURKB. Ubiquitination of AURKB by BCR(KLHL21) E3 ubiquitin ligase complex may not lead to its degradation by the proteasome. The polypeptide is Kelch-like protein 21 (KLHL21) (Homo sapiens (Human)).